The primary structure comprises 124 residues: CRISPR-associated endoribonuclease Cas2 4 (124 aa).

Aspartate 40 provides a ligand contact to Mg(2+).

It belongs to the CRISPR-associated endoribonuclease Cas2 protein family. In terms of assembly, homodimer, forms a heterotetramer with a Cas1 homodimer. Mg(2+) serves as cofactor.

CRISPR (clustered regularly interspaced short palindromic repeat), is an adaptive immune system that provides protection against mobile genetic elements (viruses, transposable elements and conjugative plasmids). CRISPR clusters contain sequences complementary to antecedent mobile elements and target invading nucleic acids. CRISPR clusters are transcribed and processed into CRISPR RNA (crRNA). Functions as a ssRNA-specific endoribonuclease. Involved in the integration of spacer DNA into the CRISPR cassette. The sequence is that of CRISPR-associated endoribonuclease Cas2 4 from Rhodospirillum rubrum (strain ATCC 11170 / ATH 1.1.1 / DSM 467 / LMG 4362 / NCIMB 8255 / S1).